Reading from the N-terminus, the 304-residue chain is Glycine--tRNA ligase alpha subunit (304 aa).

It belongs to the class-II aminoacyl-tRNA synthetase family. In terms of assembly, tetramer of two alpha and two beta subunits.

The protein localises to the cytoplasm. The catalysed reaction is tRNA(Gly) + glycine + ATP = glycyl-tRNA(Gly) + AMP + diphosphate. The protein is Glycine--tRNA ligase alpha subunit of Streptococcus agalactiae serotype III (strain NEM316).